A 93-amino-acid polypeptide reads, in one-letter code: Protein FptB (93 aa).

A signal peptide spans 1 to 25; sequence MPRQSGFGWAWRVPLALAGSLAAAT. 2 helical membrane passes run 44–64 and 71–91; these read LYAG…GGLL and FAWR…LLAG.

The protein resides in the cell membrane. Its function is as follows. May play some role in transport of Fe(3+)-pyochelin. The polypeptide is Protein FptB (fptB) (Pseudomonas aeruginosa (strain ATCC 15692 / DSM 22644 / CIP 104116 / JCM 14847 / LMG 12228 / 1C / PRS 101 / PAO1)).